We begin with the raw amino-acid sequence, 196 residues long: UPF0134 protein MPN_501 (196 aa).

Belongs to the UPF0134 family.

The chain is UPF0134 protein MPN_501 from Mycoplasma pneumoniae (strain ATCC 29342 / M129 / Subtype 1) (Mycoplasmoides pneumoniae).